The chain runs to 606 residues: Electron transfer flavoprotein-ubiquinone oxidoreductase, mitochondrial (606 aa).

59–73 (VVIVGAGPSGLSTAI) lines the FAD pocket. A helical membrane pass occupies residues 448 to 468 (PSLHWGTIPGLIYGALEMYIF). [4Fe-4S] cluster-binding residues include Cys-551, Cys-575, Cys-578, and Cys-581.

This sequence belongs to the ETF-QO/FixC family. In terms of assembly, monomer. [4Fe-4S] cluster serves as cofactor. It depends on FAD as a cofactor.

It is found in the mitochondrion inner membrane. It catalyses the reaction a ubiquinone + reduced [electron-transfer flavoprotein] = a ubiquinol + oxidized [electron-transfer flavoprotein] + H(+). In terms of biological role, accepts electrons from ETF and reduces ubiquinone. The protein is Electron transfer flavoprotein-ubiquinone oxidoreductase, mitochondrial (etfdh) of Dictyostelium discoideum (Social amoeba).